The chain runs to 385 residues: Isocitrate dehydrogenase [NAD] subunit beta, mitochondrial (385 aa).

The transit peptide at 1–33 (MAALSRVRWLTRALVAAPNPGAWRSLCTSTVAQ) directs the protein to the mitochondrion. Lys-199 carries the N6-acetyllysine modification.

Belongs to the isocitrate and isopropylmalate dehydrogenases family. As to quaternary structure, heterooligomer of subunits alpha (IDH3A), beta (IDH3B), and gamma (IDH3G) in the apparent ratio of 2:1:1. The heterodimer containing one IDH3A and one IDH3B subunit and the heterodimer containing one IDH3A and one IDH3G subunit assemble into a heterotetramer (which contains two subunits of IDH3A, one of IDH3B and one of IDH3G) and further into the heterooctamer. In terms of tissue distribution, isoform A is predominant in heart muscle; also found in brain, kidney and liver. Isoform B is present in kidney and liver.

The protein resides in the mitochondrion. Its activity is regulated as follows. The heterotetramer and the heterodimer composed of IDH3A and IDH3G subunits can be allosterically activated by citrate (CIT) or/and ADP, and the two activators can act independently or synergistically. The heterodimer composed of IDH3A and IDH3B subunits cannot be allosterically regulated and the allosteric regulation of the heterotetramer is through the IDH3G subunit and not the IDH3B subunit. The IDH3G subunit contains the allosteric site which consists of a CIT-binding site and an ADP-binding site, and the binding of CIT and ADP causes conformational changes at the allosteric site which are transmitted to the active site in the catalytic subunit (IDH3A) through a cascade of conformational changes at the heterodimer interface, leading to stabilization of the isocitrate-binding at the active site and thus activation of the enzyme. ATP can activate the heterotetramer and the heterodimer composed of IDH3A and IDH3G subunits at low concentrations but inhibits their activities at high concentrations, whereas ATP exhibits only inhibitory effect on the heterodimer composed of IDH3A and IDH3B subunits. Plays a structural role to facilitate the assembly and ensure the full activity of the enzyme catalyzing the decarboxylation of isocitrate (ICT) into alpha-ketoglutarate. The heterodimer composed of the alpha (IDH3A) and beta (IDH3B) subunits and the heterodimer composed of the alpha (IDH3A) and gamma (IDH3G) subunits, have considerable basal activity but the full activity of the heterotetramer (containing two subunits of IDH3A, one of IDH3B and one of IDH3G) requires the assembly and cooperative function of both heterodimers. This is Isocitrate dehydrogenase [NAD] subunit beta, mitochondrial (IDH3B) from Bos taurus (Bovine).